Here is a 541-residue protein sequence, read N- to C-terminus: uncharacterized protein (541 aa).

A run of 12 helical transmembrane segments spans residues 99 to 119 (WIVV…SSVY), 131 to 153 (GVSI…FGSL), 165 to 185 (FVVY…GGCA), 187 to 207 (NIWT…TPLS), 224 to 244 (YVLP…PIIG), 256 to 276 (WVFW…FFFM), 325 to 345 (LLIT…VYII), 367 to 387 (IGLS…CTPI), 409 to 429 (LYPL…FAWT), 439 to 459 (WIVP…VFFV), 472 to 494 (AASA…SLVG), and 508 to 528 (SLLG…FIYG).

Belongs to the major facilitator superfamily. CAR1 family.

The protein resides in the membrane. This is an uncharacterized protein from Schizosaccharomyces pombe (strain 972 / ATCC 24843) (Fission yeast).